A 271-amino-acid chain; its full sequence is Regulatory protein RecX (271 aa).

It belongs to the RecX family.

It is found in the cytoplasm. In terms of biological role, modulates RecA activity. The chain is Regulatory protein RecX from Lactobacillus delbrueckii subsp. bulgaricus (strain ATCC BAA-365 / Lb-18).